The primary structure comprises 484 residues: PTS system MurNAc-GlcNAc-specific EIIBC component (484 aa).

The region spanning 5–87 (QQLAERIIAA…AELSGVKLGD (83 aa)) is the PTS EIIB type-1 domain. Cys27 (phosphocysteine intermediate; for EIIB activity) is an active-site residue. In terms of domain architecture, PTS EIIC type-1 spans 130–484 (KSIANIFIPL…AMRQTDLLGD (355 aa)). The next 10 helical transmembrane spans lie at 135–155 (IFIP…IAAV), 160–180 (MVAG…FNVI), 200–220 (FGAT…TGIA), 234–254 (LQPG…LSIV), 274–294 (IALL…AGFV), 305–325 (IISI…LPLV), 349–369 (LLPI…ALWV), 384–404 (ALPV…TLPL), 408–428 (FLTA…IGHI), and 450–470 (LGYI…TYLF).

It localises to the cell membrane. It carries out the reaction N-acetyl-beta-D-muramate-(1-&gt;4)-N-acetyl-D-glucosamine(out) + N(pros)-phospho-L-histidyl-[protein] = 6-phospho-N-acetyl-beta-D-muramate-(1-&gt;4)-N-acetyl-D-glucosamine(in) + L-histidyl-[protein]. It participates in cell wall biogenesis; peptidoglycan recycling. Functionally, the phosphoenolpyruvate-dependent sugar phosphotransferase system (sugar PTS), a major carbohydrate active transport system, catalyzes the phosphorylation of incoming sugar substrates concomitantly with their translocation across the cell membrane. This system is involved in the uptake and phosphorylation of MurNAc-GlcNAc, the principle peptidoglycan turnover product of S.aureus, yielding cytoplasmic MurNAc 6P-GlcNAc. The protein is PTS system MurNAc-GlcNAc-specific EIIBC component of Staphylococcus aureus (strain bovine RF122 / ET3-1).